The chain runs to 497 residues: Alkane hydroxylase MAH1 (497 aa).

A helical membrane pass occupies residues 3-23 (MLGFYVTFIFFLVCLFTYFFL). C444 lines the heme pocket.

This sequence belongs to the cytochrome P450 family. The cofactor is heme. Expressed in the expanding regions of the inflorescence stems, specifically to the epidermal pavement cells, petioles and siliques.

The protein resides in the endoplasmic reticulum membrane. Its function is as follows. Involved in the formation of secondary alcohols and ketones in stem cuticular wax. Catalyzes the hydroxylation of a methylene unit in the middle of alkane molecules to form secondary alcohols and possibly also a second hydroxylation leading to the corresponding ketones. The polypeptide is Alkane hydroxylase MAH1 (Arabidopsis thaliana (Mouse-ear cress)).